The following is a 317-amino-acid chain: Ribosomal large subunit pseudouridine synthase D (317 aa).

One can recognise an S4 RNA-binding domain in the interval 15-89 (WRLDRALASL…IPLEIVFEDE (75 aa)). Asp-141 is a catalytic residue.

It belongs to the pseudouridine synthase RluA family.

Its subcellular location is the cytoplasm. It catalyses the reaction uridine(1911/1915/1917) in 23S rRNA = pseudouridine(1911/1915/1917) in 23S rRNA. Functionally, responsible for synthesis of pseudouridine from uracil at positions 1911, 1915 and 1917 in 23S ribosomal RNA. The polypeptide is Ribosomal large subunit pseudouridine synthase D (Zymomonas mobilis subsp. mobilis (strain ATCC 31821 / ZM4 / CP4)).